A 235-amino-acid chain; its full sequence is Phosphoribosylaminoimidazole-succinocarboxamide synthase (235 aa).

It belongs to the SAICAR synthetase family.

The enzyme catalyses 5-amino-1-(5-phospho-D-ribosyl)imidazole-4-carboxylate + L-aspartate + ATP = (2S)-2-[5-amino-1-(5-phospho-beta-D-ribosyl)imidazole-4-carboxamido]succinate + ADP + phosphate + 2 H(+). It functions in the pathway purine metabolism; IMP biosynthesis via de novo pathway; 5-amino-1-(5-phospho-D-ribosyl)imidazole-4-carboxamide from 5-amino-1-(5-phospho-D-ribosyl)imidazole-4-carboxylate: step 1/2. The polypeptide is Phosphoribosylaminoimidazole-succinocarboxamide synthase (Chlorobaculum tepidum (strain ATCC 49652 / DSM 12025 / NBRC 103806 / TLS) (Chlorobium tepidum)).